The following is a 179-amino-acid chain: Gamma-crystallin S (179 aa).

S2 is modified (N-acetylserine). The tract at residues 2–5 (SKTG) is N-terminal arm. 2 consecutive Beta/gamma crystallin 'Greek key' domains span residues 6 to 44 (TKITFYEDKNFQGRRYDCDCDCSDFHTYLSRCNSIRVEG) and 45 to 87 (GTWA…RALH). A connecting peptide region spans residues 88–93 (LSSGGQ). Beta/gamma crystallin 'Greek key' domains are found at residues 94 to 134 (YKIQ…KVLD) and 135 to 177 (GAWI…RRIV).

Belongs to the beta/gamma-crystallin family. In terms of assembly, monomer.

In terms of biological role, crystallins are the dominant structural components of the vertebrate eye lens. This Oryctolagus cuniculus (Rabbit) protein is Gamma-crystallin S (CRYGS).